Consider the following 249-residue polypeptide: GTP cyclohydrolase III (249 aa).

The protein belongs to the archaeal-type GTP cyclohydrolase family.

It carries out the reaction GTP + 3 H2O = 2-amino-5-formylamino-6-(5-phospho-D-ribosylamino)pyrimidin-4(3H)-one + 2 phosphate + 2 H(+). Functionally, catalyzes the formation of 2-amino-5-formylamino-6-ribofuranosylamino-4(3H)-pyrimidinone ribonucleotide monophosphate and inorganic phosphate from GTP. Also has an independent pyrophosphate phosphohydrolase activity. The polypeptide is GTP cyclohydrolase III (Methanothermobacter thermautotrophicus (strain ATCC 29096 / DSM 1053 / JCM 10044 / NBRC 100330 / Delta H) (Methanobacterium thermoautotrophicum)).